Consider the following 978-residue polypeptide: Regulator of telomere elongation helicase 1 homolog (978 aa).

The Helicase ATP-binding domain maps to 7–318; sequence NGIPVNFPFE…EDDDAKKDFT (312 aa). An ATP-binding site is contributed by 42 to 49; it reads SPTGTGKT. Residues Cys-159, Cys-177, Cys-186, and Cys-222 each contribute to the [4Fe-4S] cluster site. The DEAH box motif lies at 265-268; the sequence is DEAH.

Belongs to the helicase family. RAD3/XPD subfamily.

Its subcellular location is the nucleus. The catalysed reaction is ATP + H2O = ADP + phosphate + H(+). Its function is as follows. A probable ATP-dependent DNA helicase implicated in DNA repair and the maintenance of genomic stability. Acts as an anti-recombinase to counteract toxic recombination and limit crossover during meiosis. Regulates meiotic recombination and crossover homeostasis by physically dissociating strand invasion events and thereby promotes noncrossover repair by meiotic synthesis dependent strand annealing (SDSA) as well as disassembly of D loop recombination intermediates. The chain is Regulator of telomere elongation helicase 1 homolog from Culex quinquefasciatus (Southern house mosquito).